A 513-amino-acid chain; its full sequence is MQLNSTEISELIKQRIAQFNVVSEAHNEGTIVSVSDGIIRVHGLAEVMQGEMIALPGNRFAIALNLERDSVGAVVMGPYADLAEGMKVKCTGRILEVPVGRGLLGRVVNTLGAPIDGKVPLEHDGFSAVEAIAPGVIERQSVDEPVQTGYKSVDAMIPIGRGQRELIIGDRQTGKSALAIDAIINQRDSGIKCIYVAIGQKASTIANVVRKLEEHGALANTIVVVATASESAALQYLAPYAGCAMGEYFRDRGEDALIIYDDLSKQAVAYRQISLLLRRPPGREAYPGDVFYLHSRLLERASRVNAEYVENYTKGEVKGKTGSLTALPIIETQAGDVSAFVPTNVISITDGQIFLESNLFNAGIRPAVNPGISVSRVGGAAQTKIMKKLSGGIRTALAQYRELAAFSQFASDLDDATRKQLNHGQKVTELLKQKQYAPMSVAQQALVLFAAERGYLEDVELAKIGDFEAALMAYVDREQGELMQQINQTGAYNDYIEGKLKGILDTFKATQSW.

Residue 169-176 (GDRQTGKS) coordinates ATP.

The protein belongs to the ATPase alpha/beta chains family. F-type ATPases have 2 components, CF(1) - the catalytic core - and CF(0) - the membrane proton channel. CF(1) has five subunits: alpha(3), beta(3), gamma(1), delta(1), epsilon(1). CF(0) has three main subunits: a(1), b(2) and c(9-12). The alpha and beta chains form an alternating ring which encloses part of the gamma chain. CF(1) is attached to CF(0) by a central stalk formed by the gamma and epsilon chains, while a peripheral stalk is formed by the delta and b chains.

The protein localises to the cell inner membrane. It catalyses the reaction ATP + H2O + 4 H(+)(in) = ADP + phosphate + 5 H(+)(out). Produces ATP from ADP in the presence of a proton gradient across the membrane. The alpha chain is a regulatory subunit. The polypeptide is ATP synthase subunit alpha (Sodalis glossinidius (strain morsitans)).